The following is a 237-amino-acid chain: Methylthioribulose-1-phosphate dehydratase (237 aa).

Cys97 contacts substrate. 2 residues coordinate Zn(2+): His114 and His116. Glu143 functions as the Proton donor/acceptor in the catalytic mechanism. A Zn(2+)-binding site is contributed by His199.

The protein belongs to the aldolase class II family. MtnB subfamily. Zn(2+) is required as a cofactor.

The protein localises to the cytoplasm. The catalysed reaction is 5-(methylsulfanyl)-D-ribulose 1-phosphate = 5-methylsulfanyl-2,3-dioxopentyl phosphate + H2O. It participates in amino-acid biosynthesis; L-methionine biosynthesis via salvage pathway; L-methionine from S-methyl-5-thio-alpha-D-ribose 1-phosphate: step 2/6. Functionally, catalyzes the dehydration of methylthioribulose-1-phosphate (MTRu-1-P) into 2,3-diketo-5-methylthiopentyl-1-phosphate (DK-MTP-1-P). The protein is Methylthioribulose-1-phosphate dehydratase of Coccidioides posadasii (strain C735) (Valley fever fungus).